A 211-amino-acid chain; its full sequence is WAP four-disulfide core domain protein 1 (211 aa).

A signal peptide spans 1-23 (MGNCGRKVLRALSFLLLLGSSSA). Positions 50-99 (RQPHADRCPPPPRTLPPGACQATRCQADSECPRHRRCCYNGCAYACLEAV) constitute a WAP domain. 4 cysteine pairs are disulfide-bonded: cysteine 57/cysteine 87, cysteine 69/cysteine 91, cysteine 74/cysteine 86, and cysteine 80/cysteine 95. Positions 182-198 (VLRQRLHKEYPEGDSKN) are enriched in basic and acidic residues. The segment at 182-211 (VLRQRLHKEYPEGDSKNVAEPGKGQQRHFP) is disordered.

Its subcellular location is the secreted. Functionally, has growth inhibitory activity. The sequence is that of WAP four-disulfide core domain protein 1 (Wfdc1) from Mus musculus (Mouse).